Here is a 917-residue protein sequence, read N- to C-terminus: Lipoxygenase 6, chloroplastic (917 aa).

A chloroplast-targeting transit peptide spans 1–40 (MFVASPVKTNFNGVSLVKSPAFSALSCRKQHRVPISRQVR). A compositionally biased stretch (basic and acidic residues) spans 46-57 (EEKAVDQEDGKK). The disordered stretch occupies residues 46 to 66 (EEKAVDQEDGKKSTNKPLINS). Residues 98-216 (ERFEHQLELF…DNPQARIIFR (119 aa)) enclose the PLAT domain. A Lipoxygenase domain is found at 219–917 (PCLPSETPDG…GRGIPNSISI (699 aa)). Residues His575, His580, His767, and Asn771 each contribute to the Fe cation site. Positions 880–904 (KDKKLKNRTGAGMPPYELLLPTSPH) are disordered. Ile917 is a Fe cation binding site.

The protein belongs to the lipoxygenase family. Requires Fe cation as cofactor.

The protein resides in the plastid. It localises to the chloroplast. It catalyses the reaction (9Z,12Z)-octadecadienoate + O2 = (13S)-hydroperoxy-(9Z,11E)-octadecadienoate. It carries out the reaction (9Z,12Z,15Z)-octadecatrienoate + O2 = (13S)-hydroperoxy-(9Z,11E,15Z)-octadecatrienoate. It participates in lipid metabolism; oxylipin biosynthesis. In terms of biological role, plant lipoxygenases may be involved in a number of diverse aspects of plant physiology including growth and development, pest resistance, and senescence or responses to wounding. Catalyzes the hydroperoxidation of lipids containing a cis,cis-1,4-pentadiene structure. 13S-lipoxygenase that can use linolenic acid as substrates. This Arabidopsis thaliana (Mouse-ear cress) protein is Lipoxygenase 6, chloroplastic.